The primary structure comprises 300 residues: Protein Bel-1 (300 aa).

3 disordered regions span residues 1–20 (MDSY…QDLQ), 26–50 (VGPE…RRPR), and 185–237 (KPST…GDTV). Residues 11–20 (ASTSGLQDLQ) are compositionally biased toward polar residues. The DNA-binding element occupies 89–200 (SKSICKRLIL…PEGPKPRRRH (112 aa)). Positions 201–210 (DPVLRCDMFE) are enriched in basic and acidic residues. The span at 211-222 (KHHKPRPKRSRK) shows a compositional bias: basic residues. Residues 214-223 (KPRPKRSRKR) carry the Nuclear localization signal motif. The segment at 224–300 (SIDHESCASS…PSGSGEHSVL (77 aa)) is transactivation domain.

As to quaternary structure, homodimer or homomultimer. Forms complexes with the host nuclear factors NFIA, NFIB, NFIC or NFIX.

It localises to the host nucleus. Functionally, transcriptional transactivator that activates the viral internal promoter (IP), thereby enhancing its own expression. This transactivation is repressed by nuclear factor I. Also transactivates the long terminal repeat (LTR) promoter, thereby inducing structural gene expression, initiating the late phase of infection. It is therefore a key regulator of viral gene expression. It directly binds to and activates DNA target sites of viral promoters and those of distinct cellular genes. Required for viral replication. The protein is Protein Bel-1 (bel1) of Pan troglodytes (Chimpanzee).